Here is a 144-residue protein sequence, read N- to C-terminus: Ribosomal RNA large subunit methyltransferase H (144 aa).

S-adenosyl-L-methionine-binding positions include Gly-92 and 111-116 (LSPMTF).

This sequence belongs to the RNA methyltransferase RlmH family. As to quaternary structure, homodimer.

It is found in the cytoplasm. The catalysed reaction is pseudouridine(1915) in 23S rRNA + S-adenosyl-L-methionine = N(3)-methylpseudouridine(1915) in 23S rRNA + S-adenosyl-L-homocysteine + H(+). Its function is as follows. Specifically methylates the pseudouridine at position 1915 (m3Psi1915) in 23S rRNA. The protein is Ribosomal RNA large subunit methyltransferase H of Synechococcus sp. (strain CC9311).